The following is a 2364-amino-acid chain: Actin-binding protein F (2364 aa).

Over residues 138 to 157 (THQTSPTTETTTTPSSSSSS) the composition is skewed to low complexity. Disordered stretches follow at residues 138–168 (THQT…STLD), 1087–1111 (QASK…EKRR), 1412–1435 (NNNS…RAPM), and 1929–2088 (KLIS…SEFN). A compositionally biased stretch (basic and acidic residues) spans 1092 to 1111 (NESEVKDEKSMRNRQVEKRR). Composition is skewed to low complexity over residues 1412-1428 (NNNS…NSFG) and 1932-1960 (SSST…TTTD). The stretch at 1960-2017 (DSSKDKKKLEKEEKQREKERKQKEKEDKKREKEELKKKEKEEKKKKEEEKKLKKKSGS) forms a coiled coil. The segment covering 1961 to 2010 (SSKDKKKLEKEEKQREKERKQKEKEDKKREKEELKKKEKEEKKKKEEEKK) has biased composition (basic and acidic residues). The segment covering 2027-2047 (ATPTTTTTTEATTTTTTTTAT) has biased composition (low complexity). Positions 2052-2070 (IKPEKIASDDEHDDHHHDE) are enriched in basic and acidic residues. The span at 2071-2081 (HDEEDDDDEPL) shows a compositional bias: acidic residues. Residues 2129–2173 (VQRWNSLFKDLRNKVDQVSNKDSVEIDYEKEIDRERRQNKMASNE) are a coiled coil.

Interacts with actin.

The protein localises to the nucleus. Its subcellular location is the cytoplasm. The protein resides in the cytoskeleton. This Dictyostelium discoideum (Social amoeba) protein is Actin-binding protein F (abpF).